Reading from the N-terminus, the 426-residue chain is Phosphoribosylamine--glycine ligase (426 aa).

The 204-residue stretch at K109–T312 folds into the ATP-grasp domain. An ATP-binding site is contributed by L138 to S193. E282 and N284 together coordinate Mg(2+).

The protein belongs to the GARS family. The cofactor is Mg(2+). Requires Mn(2+) as cofactor.

The enzyme catalyses 5-phospho-beta-D-ribosylamine + glycine + ATP = N(1)-(5-phospho-beta-D-ribosyl)glycinamide + ADP + phosphate + H(+). Its pathway is purine metabolism; IMP biosynthesis via de novo pathway; N(1)-(5-phospho-D-ribosyl)glycinamide from 5-phospho-alpha-D-ribose 1-diphosphate: step 2/2. The polypeptide is Phosphoribosylamine--glycine ligase (Corynebacterium ammoniagenes (Brevibacterium ammoniagenes)).